Consider the following 892-residue polypeptide: Bifunctional uridylyltransferase/uridylyl-removing enzyme (892 aa).

A uridylyltransferase region spans residues 1-348 (MPNFTGNTRP…LVDAKVHVRP (348 aa)). The segment at 349 to 710 (INERFQARNG…RIHNQEPGTM (362 aa)) is uridylyl-removing. The region spanning 467–589 (VDEHTLFLIH…VGDERRLNHL (123 aa)) is the HD domain. ACT domains follow at residues 711-786 (EVFI…LTQP) and 822-892 (VMEL…YLER).

Belongs to the GlnD family. It depends on Mg(2+) as a cofactor.

The enzyme catalyses [protein-PII]-L-tyrosine + UTP = [protein-PII]-uridylyl-L-tyrosine + diphosphate. The catalysed reaction is [protein-PII]-uridylyl-L-tyrosine + H2O = [protein-PII]-L-tyrosine + UMP + H(+). Uridylyltransferase (UTase) activity is inhibited by glutamine, while glutamine activates uridylyl-removing (UR) activity. Modifies, by uridylylation and deuridylylation, the PII regulatory proteins (GlnB and homologs), in response to the nitrogen status of the cell that GlnD senses through the glutamine level. Under low glutamine levels, catalyzes the conversion of the PII proteins and UTP to PII-UMP and PPi, while under higher glutamine levels, GlnD hydrolyzes PII-UMP to PII and UMP (deuridylylation). Thus, controls uridylylation state and activity of the PII proteins, and plays an important role in the regulation of nitrogen assimilation and metabolism. The chain is Bifunctional uridylyltransferase/uridylyl-removing enzyme from Nitrosococcus oceani (strain ATCC 19707 / BCRC 17464 / JCM 30415 / NCIMB 11848 / C-107).